The primary structure comprises 188 residues: Peptidyl-tRNA hydrolase (188 aa).

Tyr-15 serves as a coordination point for tRNA. The active-site Proton acceptor is His-20. 3 residues coordinate tRNA: Tyr-64, Asn-66, and Asn-112.

This sequence belongs to the PTH family. As to quaternary structure, monomer.

It is found in the cytoplasm. The catalysed reaction is an N-acyl-L-alpha-aminoacyl-tRNA + H2O = an N-acyl-L-amino acid + a tRNA + H(+). Its function is as follows. Hydrolyzes ribosome-free peptidyl-tRNAs (with 1 or more amino acids incorporated), which drop off the ribosome during protein synthesis, or as a result of ribosome stalling. Functionally, catalyzes the release of premature peptidyl moieties from peptidyl-tRNA molecules trapped in stalled 50S ribosomal subunits, and thus maintains levels of free tRNAs and 50S ribosomes. This Cytophaga hutchinsonii (strain ATCC 33406 / DSM 1761 / CIP 103989 / NBRC 15051 / NCIMB 9469 / D465) protein is Peptidyl-tRNA hydrolase.